A 343-amino-acid polypeptide reads, in one-letter code: Geranylgeranyl pyrophosphate synthase (343 aa).

Positions 1–12 (MAYTVEPREHSK) are enriched in basic and acidic residues. Positions 1–26 (MAYTVEPREHSKNTTLPTVAMPPSPP) are disordered. Residues K69, R72, and H101 each coordinate isopentenyl diphosphate. Residues D108 and D112 each contribute to the Mg(2+) site. Residue R117 participates in dimethylallyl diphosphate binding. R118 is an isopentenyl diphosphate binding site. Residues T196 and Q229 each coordinate dimethylallyl diphosphate. Mg(2+) is bound at residue D232. Dimethylallyl diphosphate is bound by residues N236, K246, and K256.

It belongs to the FPP/GGPP synthase family. Mg(2+) is required as a cofactor.

It carries out the reaction isopentenyl diphosphate + dimethylallyl diphosphate = (2E)-geranyl diphosphate + diphosphate. The catalysed reaction is isopentenyl diphosphate + (2E)-geranyl diphosphate = (2E,6E)-farnesyl diphosphate + diphosphate. It catalyses the reaction isopentenyl diphosphate + (2E,6E)-farnesyl diphosphate = (2E,6E,10E)-geranylgeranyl diphosphate + diphosphate. The protein operates within mycotoxin biosynthesis. Functionally, geranylgeranyl pyrophosphate synthase; part of the gene cluster that mediates the biosynthesis of aphidicolin, a specific inhibitor of eukaryotic DNA synthesis and DNA polymerase alpha. The geranylgeranyl pyrophosphate synthase GGS is required for supplying a sufficient amount of geranylgeranyl diphosphate (GGDP), the general precursor of diterpenes. The diterpene synthase ACS then catalyzes the conversion of geranylgeranyl diphosphate to aphidicolan-16-beta-ol via the intermediate syn-copalyldiphosphate (syn-CDP). In addition to aphidicolan-16-beta-ol, the enzyme also produces low levels of amphidicol-15-ene and amphidicol-16-ene. The cytochrome P450 monooxygenase P450-2 then catalyzes the two-step hydroxylation from aphidicolan-16-beta-ol to 3-deoxyaphidicolin via a 17,3-deoxyaphidicolin intermediate. Finally, the cytochrome P450 monooxygenase P450-1 converts 3-deoxyaphidicolin to aphidicolin. The sequence is that of Geranylgeranyl pyrophosphate synthase (GGS) from Neocamarosporium betae (Beet black rot fungus).